The following is a 254-amino-acid chain: Metalloprotease YcaL (254 aa).

The first 19 residues, 1-19 (MKNTKLLLAIATSAALLTG), serve as a signal peptide directing secretion. The N-palmitoyl cysteine moiety is linked to residue cysteine 20. Residue cysteine 20 is the site of S-diacylglycerol cysteine attachment. Histidine 134 contributes to the Zn(2+) binding site. The active site involves glutamate 135. Zn(2+) is bound by residues histidine 138 and glutamate 193. Positions 227-254 (GRTQSMFDSHPPSTERAQHIRDRIASGK) are disordered. Positions 242–254 (RAQHIRDRIASGK) are enriched in basic and acidic residues.

It belongs to the peptidase M48B family. Zn(2+) serves as cofactor.

It is found in the cell inner membrane. In terms of biological role, involved in the degradation of the LPS-assembly protein LptD. Degrades LptD that have engaged the Bam complex but are stalled at an early step in the outer membrane protein assembly process. This Escherichia coli (strain K12) protein is Metalloprotease YcaL (ycaL).